The sequence spans 658 residues: UvrABC system protein B (658 aa).

The Helicase ATP-binding domain maps to 26 to 414 (AGLKKGLKHQ…PDVIEQIIRP (389 aa)). 39 to 46 (GATGTGKT) is an ATP binding site. A Beta-hairpin motif is present at residues 92–115 (YYDYYQPEAYVPQSDTYIEKDASI). Positions 430–592 (QIDDLMDEIN…ITPKTIRKEI (163 aa)) constitute a Helicase C-terminal domain. A UVR domain is found at 622–658 (DIFIEGMEHEMKEAAKALDFERAAELRDALLEIKAEG).

It belongs to the UvrB family. In terms of assembly, forms a heterotetramer with UvrA during the search for lesions. Interacts with UvrC in an incision complex.

It localises to the cytoplasm. In terms of biological role, the UvrABC repair system catalyzes the recognition and processing of DNA lesions. A damage recognition complex composed of 2 UvrA and 2 UvrB subunits scans DNA for abnormalities. Upon binding of the UvrA(2)B(2) complex to a putative damaged site, the DNA wraps around one UvrB monomer. DNA wrap is dependent on ATP binding by UvrB and probably causes local melting of the DNA helix, facilitating insertion of UvrB beta-hairpin between the DNA strands. Then UvrB probes one DNA strand for the presence of a lesion. If a lesion is found the UvrA subunits dissociate and the UvrB-DNA preincision complex is formed. This complex is subsequently bound by UvrC and the second UvrB is released. If no lesion is found, the DNA wraps around the other UvrB subunit that will check the other stand for damage. This is UvrABC system protein B from Listeria innocua serovar 6a (strain ATCC BAA-680 / CLIP 11262).